The following is a 385-amino-acid chain: Glutamate 5-kinase (385 aa).

ATP is bound at residue lysine 18. Serine 57, aspartate 144, and asparagine 156 together coordinate substrate. Threonine 218–lysine 224 is an ATP binding site. In terms of domain architecture, PUA spans arginine 283 to lysine 361.

It belongs to the glutamate 5-kinase family.

It is found in the cytoplasm. It carries out the reaction L-glutamate + ATP = L-glutamyl 5-phosphate + ADP. Its pathway is amino-acid biosynthesis; L-proline biosynthesis; L-glutamate 5-semialdehyde from L-glutamate: step 1/2. Functionally, catalyzes the transfer of a phosphate group to glutamate to form L-glutamate 5-phosphate. This Syntrophus aciditrophicus (strain SB) protein is Glutamate 5-kinase.